The chain runs to 274 residues: Proteasome subunit beta (274 aa).

Positions 1-52 are cleaved as a propeptide — removed in mature form; by autocatalysis; the sequence is MADPMGGAGRLPAVFMTPGTSSFTDFLSQSAPHLLPGARGGLPGPVTEVAHG. Thr-53 (nucleophile) is an active-site residue.

The protein belongs to the peptidase T1B family. As to quaternary structure, the 20S proteasome core is composed of 14 alpha and 14 beta subunits that assemble into four stacked heptameric rings, resulting in a barrel-shaped structure. The two inner rings, each composed of seven catalytic beta subunits, are sandwiched by two outer rings, each composed of seven alpha subunits. The catalytic chamber with the active sites is on the inside of the barrel. Has a gated structure, the ends of the cylinder being occluded by the N-termini of the alpha-subunits. Is capped by the proteasome-associated ATPase, ARC.

It is found in the cytoplasm. The catalysed reaction is Cleavage of peptide bonds with very broad specificity.. It participates in protein degradation; proteasomal Pup-dependent pathway. Its activity is regulated as follows. The formation of the proteasomal ATPase ARC-20S proteasome complex, likely via the docking of the C-termini of ARC into the intersubunit pockets in the alpha-rings, may trigger opening of the gate for substrate entry. Interconversion between the open-gate and close-gate conformations leads to a dynamic regulation of the 20S proteasome proteolysis activity. Component of the proteasome core, a large protease complex with broad specificity involved in protein degradation. The chain is Proteasome subunit beta from Frankia alni (strain DSM 45986 / CECT 9034 / ACN14a).